Consider the following 306-residue polypeptide: Homeobox protein HMX3 (306 aa).

The segment at 95 to 181 is disordered; sequence HTPRTEVPDK…DKKPCRKKKT (87 aa). 2 stretches are compositionally biased toward basic and acidic residues: residues 117-143 and 153-174; these read GERD…KSPE and EEGK…PDKK. A DNA-binding region (homeobox) is located at residues 178–237; it reads KKKTRTVFSRSQVFQLESTFDMKRYLSSSERAGLAASLHLTETQVKIWFQNRRNKWKRQL.

The protein belongs to the HMX homeobox family.

The protein resides in the nucleus. Its function is as follows. Transcription factor involved in specification of neuronal cell types and which is required for inner ear and hypothalamus development. Binds to the 5'-CAAGTG-3' core sequence. May act as a stage-specific inhibitor of anf1 in the anterior neural plate during the development. This chain is Homeobox protein HMX3 (hmx3), found in Xenopus laevis (African clawed frog).